Reading from the N-terminus, the 292-residue chain is ATP-dependent Clp protease proteolytic subunit 4, chloroplastic (292 aa).

The transit peptide at 1–65 (MGTLSLSSSL…LRFANASIEM (65 aa)) directs the protein to the chloroplast. An N-acetylserine modification is found at serine 66. Serine 158 acts as the Nucleophile in catalysis. Residue histidine 183 is part of the active site.

It belongs to the peptidase S14 family. In terms of assembly, component of the chloroplastic Clp protease core complex which consist of at least 16 proteins: CLPP4 (3 copies), CLPP5 (3 copies), CLPR4 (2 copies), ClpP1 (1 copy), CLPP6 (1 copy), CLPR2 (1 copy), CLPT1 (1 copy), CLPT2 (1 copy) and 3 copies of CLPP3 and/or CLPR1 and/or CLPR3. Interacts with CHIP. The core complex is organized in two heptameric rings, one containing CLPP3,4,5,6 in a 1:2:3:1 ratio and the other CLPP1 and CLPR1,2,3,4 in a 3:1:1:1:1 ratio. Post-translationally, ubiquitinated by CHIP. Mostly expressed in leaves. Also detected in stems, and to a lower extent, in roots (at protein level).

The protein resides in the plastid. Its subcellular location is the chloroplast stroma. It catalyses the reaction Hydrolysis of proteins to small peptides in the presence of ATP and magnesium. alpha-casein is the usual test substrate. In the absence of ATP, only oligopeptides shorter than five residues are hydrolyzed (such as succinyl-Leu-Tyr-|-NHMec, and Leu-Tyr-Leu-|-Tyr-Trp, in which cleavage of the -Tyr-|-Leu- and -Tyr-|-Trp bonds also occurs).. In terms of biological role, cleaves peptides in various proteins in a process that requires ATP hydrolysis. Has a chymotrypsin-like activity. Plays a major role in the degradation of misfolded proteins. Essential protein required for chloroplast development and integrity. Essential for Embryogenesis. The protein is ATP-dependent Clp protease proteolytic subunit 4, chloroplastic of Arabidopsis thaliana (Mouse-ear cress).